The primary structure comprises 213 residues: Adenylate kinase (213 aa).

An ATP-binding site is contributed by 10–15 (GAGKGT). The NMP stretch occupies residues 30 to 59 (STGDMFRAAIKEGTEMGKKAKEYMDKGALV). AMP contacts are provided by residues threonine 31, arginine 36, 57 to 59 (ALV), 85 to 88 (GFPR), and glutamine 92. The segment at 126–163 (GRRVCKNCGASYHVIFNPPQAEGKCNSCNGELYQRSDD) is LID. Residue arginine 127 coordinates ATP. Cysteine 130 and cysteine 133 together coordinate Zn(2+). ATP is bound at residue 136-137 (SY). The Zn(2+) site is built by cysteine 150 and cysteine 153. AMP is bound by residues arginine 160 and arginine 171. Glutamine 199 is a binding site for ATP.

It belongs to the adenylate kinase family. Monomer.

It localises to the cytoplasm. It carries out the reaction AMP + ATP = 2 ADP. It participates in purine metabolism; AMP biosynthesis via salvage pathway; AMP from ADP: step 1/1. Its function is as follows. Catalyzes the reversible transfer of the terminal phosphate group between ATP and AMP. Plays an important role in cellular energy homeostasis and in adenine nucleotide metabolism. This Desulforamulus reducens (strain ATCC BAA-1160 / DSM 100696 / MI-1) (Desulfotomaculum reducens) protein is Adenylate kinase.